Here is a 92-residue protein sequence, read N- to C-terminus: MHISKLPAALLIFSVALNHLKATPVRSGTNHQMDKRKCNTATCATQRLANFLVHSNNNLGPVLSPTNVGSNTYGKRSAAEIPDGDSLDLFLL.

The first 22 residues, 1–22 (MHISKLPAALLIFSVALNHLKA), serve as a signal peptide directing secretion. Residues 23 to 34 (TPVRSGTNHQMD) constitute a propeptide that is removed on maturation. An intrachain disulfide couples cysteine 38 to cysteine 43. At tyrosine 73 the chain carries Tyrosine amide. A propeptide spanning residues 77–92 (SAAEIPDGDSLDLFLL) is cleaved from the precursor.

This sequence belongs to the calcitonin family. In terms of assembly, can form homodimers. Interacts with IDE and INS. Interaction with INS inhibits homodimerization and fibril formation.

It is found in the secreted. Its function is as follows. Amylin/IAPP is a glucoregulatory peptide hormone that plays an important role in the regulation of energy homeostasis. Selectively inhibits insulin-stimulated glucose utilization and glycogen deposition in muscle, while not affecting adipocyte glucose metabolism. IAPP function is mediated by the CALCR-RAMPs (AMYRs) receptor complexes. Amylin can also bind CALCR receptor in the absence of RAMPs, although it is more selective for AMYRs. The chain is Islet amyloid polypeptide (IAPP) from Mesocricetus auratus (Golden hamster).